We begin with the raw amino-acid sequence, 300 residues long: Protoheme IX farnesyltransferase (300 aa).

The next 8 helical transmembrane spans lie at 24–44 (VTQL…PGMV), 46–66 (WHVL…AFAI), 94–114 (PQIL…LYTF), 118–138 (LTMW…TLLL), 146–166 (IVIG…AVTG), 172–192 (AWIL…VLAL), 224–244 (VILF…VVYL), and 278–298 (IVYL…RPLL).

This sequence belongs to the UbiA prenyltransferase family. Protoheme IX farnesyltransferase subfamily.

The protein resides in the cell inner membrane. It catalyses the reaction heme b + (2E,6E)-farnesyl diphosphate + H2O = Fe(II)-heme o + diphosphate. It participates in porphyrin-containing compound metabolism; heme O biosynthesis; heme O from protoheme: step 1/1. Converts heme B (protoheme IX) to heme O by substitution of the vinyl group on carbon 2 of heme B porphyrin ring with a hydroxyethyl farnesyl side group. This chain is Protoheme IX farnesyltransferase, found in Burkholderia ambifaria (strain ATCC BAA-244 / DSM 16087 / CCUG 44356 / LMG 19182 / AMMD) (Burkholderia cepacia (strain AMMD)).